A 477-amino-acid chain; its full sequence is P3 protein (477 aa).

The segment at 1-21 (MVFRSGEGHSLQWPGPEGGTG) is disordered. Transmembrane regions (helical) follow at residues 225–245 (PMLL…FLMA), 253–273 (ALAL…SYLF), 281–301 (VTLA…FLPL), 320–340 (VSKI…GVVI), 361–381 (VLLL…LAGV), 383–403 (LPIV…GYGL), 417–437 (VSIE…QLSL), and 450–470 (FLVA…HFIY).

The protein belongs to the bile acid:sodium symporter (BASS) (TC 2.A.28) family.

It is found in the membrane. In terms of biological role, the ubiquitous expression and the conservation of the sequence in distant animal species suggest that the gene codes for a protein with housekeeping functions. This Bos taurus (Bovine) protein is P3 protein (SLC10A3).